A 150-amino-acid polypeptide reads, in one-letter code: Deoxyuridine 5'-triphosphate nucleotidohydrolase (150 aa).

Residues 69-71, N82, 86-88, and K96 each bind substrate; these read RSG and LID.

This sequence belongs to the dUTPase family. Mg(2+) serves as cofactor.

It catalyses the reaction dUTP + H2O = dUMP + diphosphate + H(+). The protein operates within pyrimidine metabolism; dUMP biosynthesis; dUMP from dCTP (dUTP route): step 2/2. In terms of biological role, this enzyme is involved in nucleotide metabolism: it produces dUMP, the immediate precursor of thymidine nucleotides and it decreases the intracellular concentration of dUTP so that uracil cannot be incorporated into DNA. This is Deoxyuridine 5'-triphosphate nucleotidohydrolase from Neisseria meningitidis serogroup B (strain ATCC BAA-335 / MC58).